We begin with the raw amino-acid sequence, 159 residues long: Ribosomal RNA large subunit methyltransferase H (159 aa).

S-adenosyl-L-methionine is bound by residues L76, G108, and 127-132; that span reads FSKMTF.

This sequence belongs to the RNA methyltransferase RlmH family. As to quaternary structure, homodimer.

The protein localises to the cytoplasm. The catalysed reaction is pseudouridine(1915) in 23S rRNA + S-adenosyl-L-methionine = N(3)-methylpseudouridine(1915) in 23S rRNA + S-adenosyl-L-homocysteine + H(+). Functionally, specifically methylates the pseudouridine at position 1915 (m3Psi1915) in 23S rRNA. The chain is Ribosomal RNA large subunit methyltransferase H from Bifidobacterium adolescentis (strain ATCC 15703 / DSM 20083 / NCTC 11814 / E194a).